Reading from the N-terminus, the 396-residue chain is Purine ribonucleoside efflux pump NepI (396 aa).

The Cytoplasmic segment spans residues 1-21 (MSEFIAENRGADAITRPNWSA). The chain crosses the membrane as a helical span at residues 22–42 (VFSVAFCVACLIIVEFLPVSL). The Periplasmic segment spans residues 43-54 (LTPMAQDLGISE). The helical transmembrane segment at 55–75 (GVAGQSVTVTAFVAMFASLFI) threads the bilayer. Over 76-85 (TQTIQATDRR) the chain is Cytoplasmic. Residues 86-106 (NVVILFAVLLTLSCLLVSFAN) form a helical membrane-spanning segment. S107 is a topological domain (periplasmic). A helical transmembrane segment spans residues 108–128 (FSLLLIGRACLGLALGGFWAM). Topologically, residues 129-147 (SASLTMRLVPPRTVPKALS) are cytoplasmic. A helical membrane pass occupies residues 148-168 (VIFGAVSIALVIAAPLGSFLG). The Periplasmic portion of the chain corresponds to 169–175 (ELIGWRN). The chain crosses the membrane as a helical span at residues 176–196 (VFNAAAVMGVLCIFWIIKSLP). Residues 197-215 (SLPGEPSHQKQNTFRLLQR) are Cytoplasmic-facing. A helical membrane pass occupies residues 216–236 (PGVMAGMIAIFMSFAGQFAFF). Residues 237 to 255 (TYIRPVYMNLAGFSVDGLT) are Periplasmic-facing. The chain crosses the membrane as a helical span at residues 256–276 (LVLLSFGIASFIGTSLSSFIL). Residues 277-281 (KRSVK) lie on the Cytoplasmic side of the membrane. The chain crosses the membrane as a helical span at residues 282-302 (LALAGAPLILAVSALVLTLWG). The Periplasmic segment spans residues 303–305 (SDK). The helical transmembrane segment at 306 to 326 (IVATGVAIIWGLTFALVPVGW) threads the bilayer. The Cytoplasmic portion of the chain corresponds to 327–343 (STWITRSLADQAEKAGS). Residues 344 to 364 (IQVAVIQLANTCGAAIGGYAL) traverse the membrane as a helical segment. Topologically, residues 365 to 366 (DN) are periplasmic. A helical membrane pass occupies residues 367–387 (IGLTSPLMFSGTLMLLTALLV). Over 388-396 (TAKVKMKKS) the chain is Cytoplasmic.

It belongs to the major facilitator superfamily. DHA1 family. NepI (TC 2.A.1.2.26) subfamily.

Its subcellular location is the cell inner membrane. It carries out the reaction inosine(in) + H(+)(out) = inosine(out) + H(+)(in). It catalyses the reaction guanosine(in) + H(+)(out) = guanosine(out) + H(+)(in). Its function is as follows. Involved in the efflux of purine ribonucleosides, such as inosine and guanosine. The chain is Purine ribonucleoside efflux pump NepI from Shigella sonnei (strain Ss046).